A 243-amino-acid polypeptide reads, in one-letter code: Small ribosomal subunit protein uS3 (243 aa).

Ala-2 is subject to N-acetylalanine. 2 positions are modified to phosphoserine: Ser-6 and Ser-35. The region spanning 21 to 92 (LNEFLTRELA…SVELYAEKVA (72 aa)) is the KH type-2 domain. Phosphothreonine is present on Thr-42. Lys-62 carries the post-translational modification N6-acetyllysine. Arg-64, Arg-65, and Arg-67 each carry asymmetric dimethylarginine. Thr-70 is modified (phosphothreonine). Lys-90 participates in a covalent cross-link: Glycyl lysine isopeptide (Lys-Gly) (interchain with G-Cter in ubiquitin). Ser-104 bears the Phosphoserine mark. The residue at position 132 (Lys-132) is an N6-succinyllysine. The disordered stretch occupies residues 200–243 (PKKPLPDHVSIVEPKDEILPTTPISEQKGGKPEPPAMPQPVPTA). Residue Lys-202 forms a Glycyl lysine isopeptide (Lys-Gly) (interchain with G-Cter in ubiquitin) linkage. Phosphoserine is present on Ser-209. Lys-214 participates in a covalent cross-link: Glycyl lysine isopeptide (Lys-Gly) (interchain with G-Cter in SUMO2); alternate. Residue Lys-214 forms a Glycyl lysine isopeptide (Lys-Gly) (interchain with G-Cter in ubiquitin); alternate linkage. A phosphothreonine mark is found at Thr-220 and Thr-221. Phosphoserine is present on Ser-224. Residue Lys-230 forms a Glycyl lysine isopeptide (Lys-Gly) (interchain with G-Cter in SUMO2) linkage. Over residues 231 to 243 (PEPPAMPQPVPTA) the composition is skewed to pro residues. Thr-242 carries the post-translational modification Phosphothreonine.

The protein belongs to the universal ribosomal protein uS3 family. As to quaternary structure, component of the 40S small ribosomal subunit. Identified in a IGF2BP1-dependent mRNP granule complex containing untranslated mRNAs. Interacts with HNRPD. Interacts with PRMT1; the interaction methylates RPS3. Interacts with SUMO1; the interaction sumoylates RPS3. Interacts with UBC9. Interacts with CDK1; the interaction phosphorylates RPS3. Interacts with PRKCD; the interaction phosphorylates RPS3. Interacts with PKB/AKT; the interaction phosphorylates RPS3. Interacts with E2F1; the interaction occurs in the absence of nerve growth factor and increases transcription of pro-apoptotic proteins BCL2L11/BIM and HRK/Dp5. Interacts with the base excision repair proteins APEX1 and OGG1; interaction with OGG1 increases OGG1 N-glycosylase activity. Interacts with UNG; the interaction increases the uracil excision activity of UNG1. Interacts with HSP90; the interaction prevents the ubiquitination and proteasome-dependent degradation of RPS3 and is suppressed by increased ROS levels. Interacts with TOM70; the interaction promotes translocation of RPS3 to the mitochondrion. Interacts (via N-terminus) with RELA (via N-terminus); the interaction enhances the DNA-binding activity of the NF-kappa-B p65-p50 complex. Interacts with NFKBIA; the interaction is direct and may bridge the interaction between RPS3 and RELA. Interacts with IKKB; the interaction phosphorylates RPS3 and enhances its translocation to the nucleus. Interacts (via KH domain) with MDM2 and TP53. Interacts with TRADD. Interacts with ASCC3. Identified in a HCV IRES-mediated translation complex, at least composed of EIF3C, IGF2BP1, RPS3 and HCV RNA-replicon. Interacts with CRY1. Post-translationally, methylation by PRMT1 is required for import into the nucleolus and for ribosome assembly. In terms of processing, sumoylation by SUMO1 enhances protein stability through increased resistance to proteolysis. Sumoylation occurs at one or more of the three consensus sites, Lys-18, Lys-214 and Lys-230. Phosphorylation at Thr-221 by CDK1 occurs mainly in G2/M phase. Phosphorylation by PRKCD occurs on a non-ribosomal-associated form which results in translocation of RPS3 to the nucleus and enhances its endonuclease activity. Phosphorylated on Ser-209 by IKKB in response to activation of the NF-kappa-B p65-p50 complex which enhances the association of RPS3 with importin-alpha and mediates the nuclear translocation of RPS3. Phosphorylation by MAPK is required for translocation to the nucleus following exposure of cells to DNA damaging agents such as hydrogen peroxide. Phosphorylation by PKB/AKT mediates RPS3 nuclear translocation, enhances RPS3 endonuclease activity and suppresses RPS3-induced neuronal apoptosis. Post-translationally, ubiquitinated; ubiquitination is prevented by interaction with HSP90 which stabilizes the protein. Monoubiquitinated at Lys-214 by RNF10 and ZNF598 when a ribosome has stalled during translation of poly(A) sequences, leading to preclude synthesis of a long poly-lysine tail and initiate the ribosome quality control (RQC) pathway to degrade the potentially detrimental aberrant nascent polypeptide. Deubiquitinated at Lys-214 by USP10, preventing degradation by the proteasome and promoting 40S ribosome subunit recycling following ribosome dissociation. In terms of processing, ufmylated by UFL1.

The protein resides in the cytoplasm. Its subcellular location is the nucleus. The protein localises to the nucleolus. It localises to the mitochondrion inner membrane. It is found in the cytoskeleton. The protein resides in the spindle. It catalyses the reaction 2'-deoxyribonucleotide-(2'-deoxyribose 5'-phosphate)-2'-deoxyribonucleotide-DNA = a 3'-end 2'-deoxyribonucleotide-(2,3-dehydro-2,3-deoxyribose 5'-phosphate)-DNA + a 5'-end 5'-phospho-2'-deoxyribonucleoside-DNA + H(+). Its activity is regulated as follows. Endonuclease activity is inhibited by MgCl2 on apurinic/apyrimidinic DNA but not on UV-irradiated DNA. Functionally, component of the small ribosomal subunit. The ribosome is a large ribonucleoprotein complex responsible for the synthesis of proteins in the cell. Has endonuclease activity and plays a role in repair of damaged DNA. Cleaves phosphodiester bonds of DNAs containing altered bases with broad specificity and cleaves supercoiled DNA more efficiently than relaxed DNA. Displays high binding affinity for 7,8-dihydro-8-oxoguanine (8-oxoG), a common DNA lesion caused by reactive oxygen species (ROS). Has also been shown to bind with similar affinity to intact and damaged DNA. Stimulates the N-glycosylase activity of the base excision protein OGG1. Enhances the uracil excision activity of UNG1. Also stimulates the cleavage of the phosphodiester backbone by APEX1. When located in the mitochondrion, reduces cellular ROS levels and mitochondrial DNA damage. Has also been shown to negatively regulate DNA repair in cells exposed to hydrogen peroxide. Plays a role in regulating transcription as part of the NF-kappa-B p65-p50 complex where it binds to the RELA/p65 subunit, enhances binding of the complex to DNA and promotes transcription of target genes. Represses its own translation by binding to its cognate mRNA. Binds to and protects TP53/p53 from MDM2-mediated ubiquitination. Involved in spindle formation and chromosome movement during mitosis by regulating microtubule polymerization. Involved in induction of apoptosis through its role in activation of CASP8. Induces neuronal apoptosis by interacting with the E2F1 transcription factor and acting synergistically with it to up-regulate pro-apoptotic proteins BCL2L11/BIM and HRK/Dp5. Interacts with TRADD following exposure to UV radiation and induces apoptosis by caspase-dependent JNK activation. The chain is Small ribosomal subunit protein uS3 (RPS3) from Oryctolagus cuniculus (Rabbit).